The chain runs to 236 residues: Small ribosomal subunit protein uS2c (236 aa).

It belongs to the universal ribosomal protein uS2 family.

It is found in the plastid. Its subcellular location is the chloroplast. This Panax ginseng (Korean ginseng) protein is Small ribosomal subunit protein uS2c (rps2).